Reading from the N-terminus, the 332-residue chain is Fructose-1,6-bisphosphatase class 1 (332 aa).

Glutamate 89, aspartate 110, leucine 112, and aspartate 113 together coordinate Mg(2+). Residues 113 to 116 (DGSS), asparagine 206, tyrosine 239, 257 to 259 (YLY), and lysine 269 each bind substrate. Position 275 (glutamate 275) interacts with Mg(2+).

It belongs to the FBPase class 1 family. As to quaternary structure, homotetramer. The cofactor is Mg(2+).

It is found in the cytoplasm. It carries out the reaction beta-D-fructose 1,6-bisphosphate + H2O = beta-D-fructose 6-phosphate + phosphate. It participates in carbohydrate biosynthesis; gluconeogenesis. This Enterobacter sp. (strain 638) protein is Fructose-1,6-bisphosphatase class 1.